We begin with the raw amino-acid sequence, 605 residues long: Granule-bound starch synthase 1, chloroplastic/amyloplastic (605 aa).

The N-terminal 72 residues, 1–72 (MAALATSQLV…GGRFPSLVVC (72 aa)), are a transit peptide targeting the chloroplast. Lysine 91 provides a ligand contact to ADP-alpha-D-glucose.

This sequence belongs to the glycosyltransferase 1 family. Bacterial/plant glycogen synthase subfamily.

The protein localises to the plastid. Its subcellular location is the chloroplast. It is found in the amyloplast. It catalyses the reaction an NDP-alpha-D-glucose + [(1-&gt;4)-alpha-D-glucosyl](n) = [(1-&gt;4)-alpha-D-glucosyl](n+1) + a ribonucleoside 5'-diphosphate + H(+). The protein operates within glycan biosynthesis; starch biosynthesis. Required for the synthesis of amylose in endosperm. This Zea mays (Maize) protein is Granule-bound starch synthase 1, chloroplastic/amyloplastic (WAXY).